The chain runs to 335 residues: MKVEFAPLNIQLARRLQTVAVLQWVLKYLLLGPMSIGITVMLIIHNYLFLYIPYLMWLYFDWHTPERGGRRSSWIKNWTLWKHFKDYFPIHLIKTQDLDPSHNYIFGFHPHGIMAVGAFGNFSVNYSDFKDLFPGFTSYLHVLPLWFWCPVFREYVMSVGLVSVSKKSVSYMVSKEGGGNISVIVLGGAKESLDAHPGKFTLFIRQRKGFVKIALTHGASLVPVVSFGENELFKQTDNPEGSWIRTVQNKLQKIMGFALPLFHARGVFQYNFGLMTYRKAIHTVVGRPIPVRQTLNPTQEQIEELHQTYMEELRKLFEEHKGKYGIPEHETLVLK.

A run of 2 helical transmembrane segments spans residues 18–38 and 40–60; these read TVAV…SIGI and VMLI…WLYF. N-linked (GlcNAc...) asparagine glycans are attached at residues Asn-121 and Asn-125. A helical membrane pass occupies residues 132 to 152; the sequence is LFPGFTSYLHVLPLWFWCPVF. Asn-180 carries an N-linked (GlcNAc...) asparagine glycan.

The protein belongs to the diacylglycerol acyltransferase family. In terms of tissue distribution, expressed in stomach and liver.

The protein localises to the endoplasmic reticulum membrane. It catalyses the reaction a 2-acylglycerol + an acyl-CoA = a 1,2-diacylglycerol + CoA. The enzyme catalyses 2-(9Z-octadecenoyl)-glycerol + butanoyl-CoA = 1-butanoyl-2-(9Z-octadecenoyl)-glycerol + CoA. The catalysed reaction is 2-(9Z-octadecenoyl)-glycerol + octanoyl-CoA = 1-octanoyl-2-(9Z-octadecenoyl)-glycerol + CoA. It carries out the reaction 2-(9Z-octadecenoyl)-glycerol + dodecanoyl-CoA = 1-dodecanoyl-2-(9Z-octadecenoyl)-glycerol + CoA. It catalyses the reaction 2-(9Z-octadecenoyl)-glycerol + tetradecanoyl-CoA = 1-tetradecanoyl-2-(9Z-octadecenoyl)-glycerol + CoA. The enzyme catalyses 2-(9Z-octadecenoyl)-glycerol + hexadecanoyl-CoA = 1-hexadecanoyl-2-(9Z-octadecenoyl)-glycerol + CoA. The catalysed reaction is 2-(9Z-octadecenoyl)-glycerol + octadecanoyl-CoA = 1-octadecanoyl-2-(9Z-octadecenoyl)-glycerol + CoA. It carries out the reaction eicosanoyl-CoA + 2-(9Z-octadecenoyl)-glycerol = 1-eicosanoyl-2-(9Z-octadecenoyl)-glycerol + CoA. It catalyses the reaction 2-(9Z-octadecenoyl)-glycerol + (9Z)-octadecenoyl-CoA = 1,2-di-(9Z-octadecenoyl)-glycerol + CoA. The enzyme catalyses 2-(9Z-octadecenoyl)-glycerol + (9Z,12Z)-octadecadienoyl-CoA = 1-(9Z,12Z-octadecadienoyl)-2-(9Z-octadecenoyl)-glycerol + CoA. The catalysed reaction is 2-(9Z-octadecenoyl)-glycerol + (5Z,8Z,11Z,14Z)-eicosatetraenoyl-CoA = 1-(5Z,8Z,11Z,14Z-eicosatetraenoyl)-2-(9Z-octadecenoyl)-glycerol + CoA. It carries out the reaction a 2-acylglycerol + an acyl-CoA = a 1,2-diacyl-sn-glycerol + CoA. It catalyses the reaction a 2-acylglycerol + an acyl-CoA = a 2,3-diacyl-sn-glycerol + CoA. The enzyme catalyses a 1-acylglycerol + an acyl-CoA = a 1,2-diacylglycerol + CoA. The catalysed reaction is 1-dodecanoylglycerol + (9Z)-octadecenoyl-CoA = 1-dodecanoyl-2-(9Z-octadecenoyl)-glycerol + CoA. It carries out the reaction 1-tetradecanoylglycerol + (9Z)-octadecenoyl-CoA = 1-tetradecanoyl-2-(9Z-octadecenoyl)-glycerol + CoA. It catalyses the reaction 1-hexadecanoylglycerol + (9Z)-octadecenoyl-CoA = 1-hexadecanoyl-2-(9Z-octadecenoyl)-glycerol + CoA. The enzyme catalyses 1-(9Z-octadecenoyl)-glycerol + (9Z)-octadecenoyl-CoA = 1,2-di-(9Z-octadecenoyl)-glycerol + CoA. The catalysed reaction is 1-(9Z,12Z-octadecadienoyl)-glycerol + (9Z)-octadecenoyl-CoA = 1-(9Z,12Z-octadecadienoyl)-2-(9Z-octadecenoyl)-glycerol + CoA. It carries out the reaction 1-(9Z,12Z,15Z-octadecatrienoyl)-glycerol + (9Z)-octadecenoyl-CoA = 1-(9Z,12Z,15Z-octadecatrienoyl)-2-(9Z-octadecenoyl)-glycerol + CoA. It catalyses the reaction 1-(5Z,8Z,11Z,14Z-eicosatetraenoyl)-glycerol + (9Z)-octadecenoyl-CoA = 1-(5Z,8Z,11Z,14Z-eicosatetraenoyl)-2-(9Z-octadecenoyl)-glycerol + CoA. The enzyme catalyses a 1-acylglycerol + an acyl-CoA = a 1,3-diacylglycerol + CoA. The catalysed reaction is 1-dodecanoylglycerol + (9Z)-octadecenoyl-CoA = 1-dodecanoyl-3-(9Z-octadecenoyl)-glycerol + CoA. It carries out the reaction 1-hexadecanoylglycerol + (9Z)-octadecenoyl-CoA = 1-(9Z-octadecenoyl)-3-hexadecanoylglycerol + CoA. It catalyses the reaction 1-octadecanoylglycerol + (9Z)-octadecenoyl-CoA = 1-octadecanoyl-3-(9Z-octadecenoyl)-glycerol + CoA. The enzyme catalyses 1-(9Z-octadecenoyl)-sn-glycerol + (9Z)-octadecenoyl-CoA = 1,3-di-(9Z-octadecenoyl)-glycerol + CoA. The catalysed reaction is 1-(9Z,12Z-octadecadienoyl)-glycerol + (9Z)-octadecenoyl-CoA = 1-(9Z-octadecenoyl)-3-(9Z,12Z-octadecadienoyl)-glycerol + CoA. It carries out the reaction 1-(9Z,12Z,15Z-octadecatrienoyl)-glycerol + (9Z)-octadecenoyl-CoA = 1-(9Z,12Z,15Z-octadecatrienoyl)-3-(9Z-octadecenoyl)-glycerol + CoA. It catalyses the reaction a 1-acyl-sn-glycerol + an acyl-CoA = a 1,3-diacyl-sn-glycerol + CoA. The enzyme catalyses a 3-acyl-sn-glycerol + an acyl-CoA = a 1,3-diacyl-sn-glycerol + CoA. The catalysed reaction is 3-octadecanoyl-sn-glycerol + (9Z)-octadecenoyl-CoA = 1-(9Z-octadecenoyl)-3-octadecanoyl-sn-glycerol + CoA. It functions in the pathway glycerolipid metabolism; triacylglycerol biosynthesis. Functionally, involved in glycerolipid synthesis and lipid metabolism. Catalyzes the formation of diacylglycerol, the precursor of triacylglycerol, by transferring the acyl chain of a fatty acyl-CoA to a monoacylglycerol, mainly at the sn-1 or sn-3 positions. It uses both sn-2-monoacylglycerol (2-acylglycerol) and sn-1-monoacylglycerol (1-acyl-sn-glycerol) equally well as substrates, and uses sn-3-monoacylglycerol (3-acyl-sn-glycerol) with lower efficiency. Probably not involved in absorption of dietary fat in the small intestine. The polypeptide is 2-acylglycerol O-acyltransferase 1 (Homo sapiens (Human)).